Reading from the N-terminus, the 221-residue chain is uncharacterized protein (221 aa).

Residues Met1 to Ser26 form the signal peptide.

This is an uncharacterized protein from Mycobacterium tuberculosis (strain CDC 1551 / Oshkosh).